A 114-amino-acid polypeptide reads, in one-letter code: Large ribosomal subunit protein bL20 (114 aa).

Belongs to the bacterial ribosomal protein bL20 family.

Functionally, binds directly to 23S ribosomal RNA and is necessary for the in vitro assembly process of the 50S ribosomal subunit. It is not involved in the protein synthesizing functions of that subunit. The sequence is that of Large ribosomal subunit protein bL20 from Anaeromyxobacter dehalogenans (strain 2CP-1 / ATCC BAA-258).